The chain runs to 191 residues: Orotate phosphoribosyltransferase (191 aa).

114–122 (EDVVTTGKS) contributes to the 5-phospho-alpha-D-ribose 1-diphosphate binding site. 2 residues coordinate orotate: T118 and R146.

It belongs to the purine/pyrimidine phosphoribosyltransferase family. PyrE subfamily. As to quaternary structure, homodimer. Mg(2+) serves as cofactor.

It catalyses the reaction orotidine 5'-phosphate + diphosphate = orotate + 5-phospho-alpha-D-ribose 1-diphosphate. It functions in the pathway pyrimidine metabolism; UMP biosynthesis via de novo pathway; UMP from orotate: step 1/2. Its function is as follows. Catalyzes the transfer of a ribosyl phosphate group from 5-phosphoribose 1-diphosphate to orotate, leading to the formation of orotidine monophosphate (OMP). This chain is Orotate phosphoribosyltransferase, found in Clostridium botulinum (strain Kyoto / Type A2).